A 253-amino-acid chain; its full sequence is Putative ankyrin repeat protein NMB1133/NMB1171 (253 aa).

ANK repeat units lie at residues 196–225 (DGYT…NPAS) and 229–252 (EGYT…LEPR).

This chain is Putative ankyrin repeat protein NMB1133/NMB1171, found in Neisseria meningitidis serogroup B (strain ATCC BAA-335 / MC58).